Here is a 607-residue protein sequence, read N- to C-terminus: MNKEERAKRQSKIRNFSIIAHIDHGKSTLADRILEKTNALTQREMKAQLLDSMDLERERGITIKLNAVQLNYKAKDGEEYILHLIDTPGHVDFTYEVSRSLAACEGAILVVDAAQGIEAQTLANVYLALDNNLEILPVINKIDLPSADPERVRQEVEDVIGLDASEAVLASAKAGIGIEEILEQIVEKVPAPTGDSEEPLQCMIFDSLYDPYRGVIAYIRVVNGTVKVGDKVRMMATGKEFEVTEVGVFTPKTTQRDELTVGDVGFLAASIKNVGDTRVGDTITHAKRPAAEPLPGYRKLNPMVFCGLYPIDSARYNDLRDALEKLELNDSALEFEPETSQALGFGFRCGFLGLLHMEIIQERIEREFKIDLITTAPSVIYKVFLTNGEDMIVDNPSNMPDPQTIDRVEEPFVKAAIMVPNDYVGAVMEICQGKRGTFIDMQYLDETRVTLTYEIPLSEIVYDFFDQLKSNTKGYASFDYELIGYKPSKLVKMDILLNSEQVDALSFIVHRDSAYDRGKVIVEKLKELIPRQQFEVPIQATIGNKVVARSTIKAMRKNVLAKCYGGDISRKRKLLDKQKEGKKRMKSVGSVEVPQEAFMAVLKMDDN.

The tr-type G domain occupies 11-193; it reads SKIRNFSIIA…QIVEKVPAPT (183 aa). GTP contacts are provided by residues 23–28 and 140–143; these read DHGKST and NKID.

It belongs to the TRAFAC class translation factor GTPase superfamily. Classic translation factor GTPase family. LepA subfamily.

It is found in the cell membrane. The catalysed reaction is GTP + H2O = GDP + phosphate + H(+). In terms of biological role, required for accurate and efficient protein synthesis under certain stress conditions. May act as a fidelity factor of the translation reaction, by catalyzing a one-codon backward translocation of tRNAs on improperly translocated ribosomes. Back-translocation proceeds from a post-translocation (POST) complex to a pre-translocation (PRE) complex, thus giving elongation factor G a second chance to translocate the tRNAs correctly. Binds to ribosomes in a GTP-dependent manner. The polypeptide is Elongation factor 4 (Bacillus cereus (strain ATCC 10987 / NRS 248)).